The following is a 193-amino-acid chain: Potassium-transporting ATPase KdpC subunit (193 aa).

Residues 8 to 28 traverse the membrane as a helical segment; sequence VVLLIFLTLITGVAYPLLATG.

It belongs to the KdpC family. As to quaternary structure, the system is composed of three essential subunits: KdpA, KdpB and KdpC.

Its subcellular location is the cell inner membrane. Functionally, part of the high-affinity ATP-driven potassium transport (or Kdp) system, which catalyzes the hydrolysis of ATP coupled with the electrogenic transport of potassium into the cytoplasm. This subunit acts as a catalytic chaperone that increases the ATP-binding affinity of the ATP-hydrolyzing subunit KdpB by the formation of a transient KdpB/KdpC/ATP ternary complex. This chain is Potassium-transporting ATPase KdpC subunit, found in Photorhabdus laumondii subsp. laumondii (strain DSM 15139 / CIP 105565 / TT01) (Photorhabdus luminescens subsp. laumondii).